Here is a 155-residue protein sequence, read N- to C-terminus: Small ribosomal subunit protein uS7 (155 aa).

Belongs to the universal ribosomal protein uS7 family. As to quaternary structure, part of the 30S ribosomal subunit. Contacts proteins S9 and S11.

Functionally, one of the primary rRNA binding proteins, it binds directly to 16S rRNA where it nucleates assembly of the head domain of the 30S subunit. Is located at the subunit interface close to the decoding center, probably blocks exit of the E-site tRNA. This chain is Small ribosomal subunit protein uS7, found in Thermosipho melanesiensis (strain DSM 12029 / CIP 104789 / BI429).